Reading from the N-terminus, the 248-residue chain is Probable transcriptional regulatory protein Mnod_7401 (248 aa).

The protein belongs to the TACO1 family.

It localises to the cytoplasm. This is Probable transcriptional regulatory protein Mnod_7401 from Methylobacterium nodulans (strain LMG 21967 / CNCM I-2342 / ORS 2060).